A 205-amino-acid chain; its full sequence is uncharacterized protein (205 aa).

A signal peptide spans 1–19; sequence MKTLCVLSIFLALLGGLCT. A compositionally biased stretch (low complexity) spans 40–133; the sequence is VSSVASTSTP…PKTSKNNPKT (94 aa). The tract at residues 40–135 is disordered; that stretch reads VSSVASTSTP…TSKNNPKTQE (96 aa). A helical transmembrane segment spans residues 147-167; that stretch reads GILYLFILLLIIFVIILICFI.

The protein localises to the host membrane. This is an uncharacterized protein from Equine herpesvirus 2 (strain 86/87) (EHV-2).